The primary structure comprises 299 residues: Elongation factor Ts, mitochondrial (299 aa).

The N-terminal 18 residues, 1–18, are a transit peptide targeting the mitochondrion; it reads MLFQRRLHFHQFFGKTRV.

Belongs to the EF-Ts family.

Its subcellular location is the mitochondrion. Associates with the EF-Tu.GDP complex and induces the exchange of GDP to GTP. It remains bound to the aminoacyl-tRNA.EF-Tu.GTP complex up to the GTP hydrolysis stage on the ribosome. The protein is Elongation factor Ts, mitochondrial (tsf1) of Schizosaccharomyces pombe (strain 972 / ATCC 24843) (Fission yeast).